The following is a 336-amino-acid chain: Phospho-N-acetylmuramoyl-pentapeptide-transferase (336 aa).

10 consecutive transmembrane segments (helical) span residues 3–23, 53–73, 78–98, 118–138, 143–163, 174–194, 200–220, 226–246, 251–271, and 316–336; these read LTLI…PYFI, GGTV…LFSI, SLAL…IGFL, LALQ…PSGI, VFGY…FWVV, GIDG…GVIA, FDVL…FCFN, VFMG…ISIA, WTLL…MLQV, and AFLW…LYVF.

The protein belongs to the glycosyltransferase 4 family. MraY subfamily. Requires Mg(2+) as cofactor.

It is found in the cell membrane. The catalysed reaction is UDP-N-acetyl-alpha-D-muramoyl-L-alanyl-gamma-D-glutamyl-L-lysyl-D-alanyl-D-alanine + di-trans,octa-cis-undecaprenyl phosphate = Mur2Ac(oyl-L-Ala-gamma-D-Glu-L-Lys-D-Ala-D-Ala)-di-trans,octa-cis-undecaprenyl diphosphate + UMP. The protein operates within cell wall biogenesis; peptidoglycan biosynthesis. In terms of biological role, catalyzes the initial step of the lipid cycle reactions in the biosynthesis of the cell wall peptidoglycan: transfers peptidoglycan precursor phospho-MurNAc-pentapeptide from UDP-MurNAc-pentapeptide onto the lipid carrier undecaprenyl phosphate, yielding undecaprenyl-pyrophosphoryl-MurNAc-pentapeptide, known as lipid I. The chain is Phospho-N-acetylmuramoyl-pentapeptide-transferase from Streptococcus pyogenes serotype M1.